A 242-amino-acid chain; its full sequence is Type III pantothenate kinase (242 aa).

6–13 (DIGNSVAK) contributes to the ATP binding site. Substrate is bound by residues Y86 and 93–96 (GMDR). The active-site Proton acceptor is the D95. D116 is a K(+) binding site. Position 119 (T119) interacts with ATP. Position 171 (T171) interacts with substrate.

This sequence belongs to the type III pantothenate kinase family. In terms of assembly, homodimer. NH4(+) is required as a cofactor. Requires K(+) as cofactor.

Its subcellular location is the cytoplasm. It catalyses the reaction (R)-pantothenate + ATP = (R)-4'-phosphopantothenate + ADP + H(+). It functions in the pathway cofactor biosynthesis; coenzyme A biosynthesis; CoA from (R)-pantothenate: step 1/5. In terms of biological role, catalyzes the phosphorylation of pantothenate (Pan), the first step in CoA biosynthesis. The polypeptide is Type III pantothenate kinase (Phocaeicola vulgatus (strain ATCC 8482 / DSM 1447 / JCM 5826 / CCUG 4940 / NBRC 14291 / NCTC 11154) (Bacteroides vulgatus)).